A 338-amino-acid chain; its full sequence is Ketol-acid reductoisomerase (NADP(+)) (338 aa).

The 181-residue stretch at 1 to 181 (MKVFYDKDAD…GGGRAGIIET (181 aa)) folds into the KARI N-terminal Rossmann domain. NADP(+) is bound by residues 24–27 (YGSQ), Arg47, and Ser52. His107 is a catalytic residue. An NADP(+)-binding site is contributed by Gly133. The KARI C-terminal knotted domain maps to 182–327 (NFREETETDL…EKLRAMMPWI (146 aa)). Mg(2+)-binding residues include Asp190, Glu194, Glu226, and Glu230. Residue Ser251 participates in substrate binding.

It belongs to the ketol-acid reductoisomerase family. Mg(2+) is required as a cofactor.

The enzyme catalyses (2R)-2,3-dihydroxy-3-methylbutanoate + NADP(+) = (2S)-2-acetolactate + NADPH + H(+). It catalyses the reaction (2R,3R)-2,3-dihydroxy-3-methylpentanoate + NADP(+) = (S)-2-ethyl-2-hydroxy-3-oxobutanoate + NADPH + H(+). The protein operates within amino-acid biosynthesis; L-isoleucine biosynthesis; L-isoleucine from 2-oxobutanoate: step 2/4. Its pathway is amino-acid biosynthesis; L-valine biosynthesis; L-valine from pyruvate: step 2/4. In terms of biological role, involved in the biosynthesis of branched-chain amino acids (BCAA). Catalyzes an alkyl-migration followed by a ketol-acid reduction of (S)-2-acetolactate (S2AL) to yield (R)-2,3-dihydroxy-isovalerate. In the isomerase reaction, S2AL is rearranged via a Mg-dependent methyl migration to produce 3-hydroxy-3-methyl-2-ketobutyrate (HMKB). In the reductase reaction, this 2-ketoacid undergoes a metal-dependent reduction by NADPH to yield (R)-2,3-dihydroxy-isovalerate. In Cupriavidus pinatubonensis (strain JMP 134 / LMG 1197) (Cupriavidus necator (strain JMP 134)), this protein is Ketol-acid reductoisomerase (NADP(+)).